The primary structure comprises 363 residues: Homeobox protein Hox-A2 (363 aa).

2 disordered regions span residues 23–133 and 183–216; these read TSFP…SRRL and MKHK…DEEK. Composition is skewed to polar residues over residues 31–46 and 55–78; these read TFQS…SHST and TIPS…NGTS. The Antp-type hexapeptide motif lies at 88–93; it reads EYPWMK. The segment at residues 130–189 is a DNA-binding region (homeobox); the sequence is SRRLRTAYTNTQLLELEKEFHFNKYLCRPRRVEIAALLDLTERQVKVWFQNRRMKHKRQT.

This sequence belongs to the Antp homeobox family. Proboscipedia subfamily.

The protein resides in the nucleus. In terms of biological role, sequence-specific transcription factor which is part of a developmental regulatory system that provides cells with specific positional identities on the anterior-posterior axis. The polypeptide is Homeobox protein Hox-A2 (HOXA2) (Heterodontus francisci (Horn shark)).